We begin with the raw amino-acid sequence, 109 residues long: Protein phosphatase 1 regulatory subunit 1C (109 aa).

Residues 25–109 (AEQIRKRRPT…TNEREEQRDH (85 aa)) are disordered. Residues 45–54 (NPPEIDDKRV) show a composition bias toward basic and acidic residues. The segment covering 55–75 (PNTQGELQNASPKQRKQSVYT) has biased composition (polar residues). The segment covering 100 to 109 (TNEREEQRDH) has biased composition (basic and acidic residues).

Belongs to the protein phosphatase inhibitor 1 family.

It is found in the cytoplasm. May increase cell susceptibility to TNF-induced apoptosis. The protein is Protein phosphatase 1 regulatory subunit 1C (PPP1R1C) of Pongo abelii (Sumatran orangutan).